Consider the following 253-residue polypeptide: Uracil-DNA glycosylase (253 aa).

The Proton acceptor role is filled by aspartate 79.

This sequence belongs to the uracil-DNA glycosylase (UDG) superfamily. UNG family.

The protein localises to the cytoplasm. It catalyses the reaction Hydrolyzes single-stranded DNA or mismatched double-stranded DNA and polynucleotides, releasing free uracil.. Functionally, excises uracil residues from the DNA which can arise as a result of misincorporation of dUMP residues by DNA polymerase or due to deamination of cytosine. The protein is Uracil-DNA glycosylase of Xylella fastidiosa (strain M12).